The sequence spans 250 residues: Cobalt transport protein CbiM (250 aa).

An N-terminal signal peptide occupies residues 1–26; sequence MNKKEKRIVAIAAAFALCFGISPAVN. The next 6 helical transmembrane spans lie at 38–58, 68–88, 102–122, 134–154, 165–185, and 209–229; these read KYCI…YFSI, SITM…LKIP, LGAI…VLIF, TLGA…FGIY, LSGI…VTSI, and FAPT…VIMI.

It belongs to the CbiM family. Forms an energy-coupling factor (ECF) transporter complex composed of an ATP-binding protein (A component, CbiO), a transmembrane protein (T component, CbiQ) and 2 possible substrate-capture proteins (S components, CbiM and CbiN) of unknown stoichimetry.

Its subcellular location is the cell membrane. It participates in cofactor biosynthesis; adenosylcobalamin biosynthesis. Functionally, part of the energy-coupling factor (ECF) transporter complex CbiMNOQ involved in cobalt import. The chain is Cobalt transport protein CbiM from Lachnoclostridium phytofermentans (strain ATCC 700394 / DSM 18823 / ISDg) (Clostridium phytofermentans).